Here is a 378-residue protein sequence, read N- to C-terminus: Zinc finger protein DPF3 (378 aa).

A Glycyl lysine isopeptide (Lys-Gly) (interchain with G-Cter in SUMO2) cross-link involves residue lysine 99. The disordered stretch occupies residues 146 to 193 (LENDENVEEGNEEEDLEEDVPKRKNRTRGRARGSAGGRRRHDAASQED). Residues 148 to 163 (NDENVEEGNEEEDLEE) show a composition bias toward acidic residues. A compositionally biased stretch (basic residues) spans 168–186 (RKNRTRGRARGSAGGRRRH). The C2H2-type zinc-finger motif lies at 198-221 (YVCDICGKRYKNRPGLSYHYAHTH). Residues 225–254 (EEGDEAQDQETRSPPNHRNENHRPQKGPDG) are disordered. 2 PHD-type zinc fingers span residues 259-319 (NNYC…CKSC) and 316-366 (CKSC…CWEL). Residues 317–332 (KSCILCGTSENDDQLL) form an interaction with HDGFL2 region. Glycine 323 is modified (phosphoserine).

It belongs to the requiem/DPF family. In terms of assembly, component of the BAF complex, which includes at least actin (ACTB), ARID1A, ARID1B/BAF250, SMARCA2, SMARCA4/BRG1/BAF190A, ACTL6A/BAF53, ACTL6B/BAF53B, SMARCE1/BAF57, SMARCC1/BAF155, SMARCC2/BAF170, SMARCB1/SNF5/INI1, and one or more of SMARCD1/BAF60A, SMARCD2/BAF60B, or SMARCD3/BAF60C. In muscle cells, the BAF complex also contains DPF3. Interacts with acetylated histones H3 and H4. Component of neuron-specific chromatin remodeling complex (nBAF complex) composed of at least, ARID1A/BAF250A or ARID1B/BAF250B, SMARCD1/BAF60A, SMARCD3/BAF60C, SMARCA2/BRM/BAF190B, SMARCA4/BRG1/BAF190A, SMARCB1/BAF47, SMARCC1/BAF155, SMARCE1/BAF57, SMARCC2/BAF170, DPF1/BAF45B, DPF3/BAF45C, ACTL6B/BAF53B and actin. As to quaternary structure, interacts with HDGFL2. Interacts with SMARCA4/BRG1/BAF190A, SMARCC1/BAF155 and SMARCD1/BAF60A. In terms of tissue distribution, expressed in the heart and somites. Expressed in cerebellum and spinal cord, but not in cerebral cortex. Expressed specifically in post-mitotic neurons (at protein level).

The protein localises to the nucleus. Muscle-specific component of the BAF complex, a multiprotein complex involved in transcriptional activation and repression of select genes by chromatin remodeling (alteration of DNA-nucleosome topology). Specifically binds acetylated lysines on histone 3 and 4 (H3K14ac, H3K9ac, H4K5ac, H4K8ac, H4K12ac, H4K16ac). In the complex, it acts as a tissue-specific anchor between histone acetylations and methylations and chromatin remodeling. It thereby probably plays an essential role in heart and skeletal muscle development. Belongs to the neuron-specific chromatin remodeling complex (nBAF complex). During neural development a switch from a stem/progenitor to a post-mitotic chromatin remodeling mechanism occurs as neurons exit the cell cycle and become committed to their adult state. The transition from proliferating neural stem/progenitor cells to post-mitotic neurons requires a switch in subunit composition of the npBAF and nBAF complexes. As neural progenitors exit mitosis and differentiate into neurons, npBAF complexes which contain ACTL6A/BAF53A and PHF10/BAF45A, are exchanged for homologous alternative ACTL6B/BAF53B and DPF1/BAF45B or DPF3/BAF45C subunits in neuron-specific complexes (nBAF). The npBAF complex is essential for the self-renewal/proliferative capacity of the multipotent neural stem cells. The nBAF complex along with CREST plays a role regulating the activity of genes essential for dendrite growth. Functionally, acts as a regulator of myogenesis in cooperation with HDGFL2. Mediates the interaction of HDGFL2 with the BAF complex. HDGFL2-DPF3a activate myogenic genes by increasing chromatin accessibility through recruitment of SMARCA4/BRG1/BAF190A (ATPase subunit of the BAF complex) to myogenic gene promoters. This Mus musculus (Mouse) protein is Zinc finger protein DPF3 (Dpf3).